Consider the following 172-residue polypeptide: Small ribosomal subunit protein uS5 (172 aa).

The S5 DRBM domain occupies 16–79 (LKDRLVAINR…ESAKKNLTRV (64 aa)).

The protein belongs to the universal ribosomal protein uS5 family. In terms of assembly, part of the 30S ribosomal subunit. Contacts proteins S4 and S8.

Its function is as follows. With S4 and S12 plays an important role in translational accuracy. Functionally, located at the back of the 30S subunit body where it stabilizes the conformation of the head with respect to the body. This chain is Small ribosomal subunit protein uS5, found in Bacteroides fragilis (strain ATCC 25285 / DSM 2151 / CCUG 4856 / JCM 11019 / LMG 10263 / NCTC 9343 / Onslow / VPI 2553 / EN-2).